The chain runs to 562 residues: NAD-dependent malic enzyme (562 aa).

Y101 acts as the Proton donor in catalysis. R154 serves as a coordination point for NAD(+). K172 functions as the Proton acceptor in the catalytic mechanism. Residues E243, D244, and D267 each contribute to the a divalent metal cation site. The NAD(+) site is built by D267 and N415.

This sequence belongs to the malic enzymes family. As to quaternary structure, homotetramer. The cofactor is Mg(2+). Requires Mn(2+) as cofactor.

It catalyses the reaction (S)-malate + NAD(+) = pyruvate + CO2 + NADH. The enzyme catalyses oxaloacetate + H(+) = pyruvate + CO2. In Shewanella sp. (strain MR-4), this protein is NAD-dependent malic enzyme.